We begin with the raw amino-acid sequence, 201 residues long: uncharacterized protein (201 aa).

Helical transmembrane passes span 9-29 (YNVF…ILVA), 42-62 (FLFV…FFDV), 86-106 (SGVI…VVMV), and 126-146 (LPYL…SIGM). Basic and acidic residues-rich tracts occupy residues 165–174 (EPTDPNKTDN) and 182–191 (DENKKNEKEQ). The tract at residues 165–201 (EPTDPNKTDNRAVVINLDENKKNEKEQSPPSAEMTSL) is disordered. The segment covering 192 to 201 (SPPSAEMTSL) has biased composition (polar residues).

The protein localises to the cell membrane. This is an uncharacterized protein from Mycoplasma genitalium (strain ATCC 33530 / DSM 19775 / NCTC 10195 / G37) (Mycoplasmoides genitalium).